Here is a 292-residue protein sequence, read N- to C-terminus: Small ribosomal subunit biogenesis GTPase RsgA (292 aa).

The region spanning 64-221 (RSELFRPAVA…LVDTPGFSSL (158 aa)) is the CP-type G domain. GTP-binding positions include 113–116 (NKMD) and 164–172 (GPSGVGKST). Cys-245, Cys-250, His-252, and Cys-258 together coordinate Zn(2+).

The protein belongs to the TRAFAC class YlqF/YawG GTPase family. RsgA subfamily. Monomer. Associates with 30S ribosomal subunit, binds 16S rRNA. Requires Zn(2+) as cofactor.

It localises to the cytoplasm. In terms of biological role, one of several proteins that assist in the late maturation steps of the functional core of the 30S ribosomal subunit. Helps release RbfA from mature subunits. May play a role in the assembly of ribosomal proteins into the subunit. Circularly permuted GTPase that catalyzes slow GTP hydrolysis, GTPase activity is stimulated by the 30S ribosomal subunit. The protein is Small ribosomal subunit biogenesis GTPase RsgA of Clostridium botulinum (strain 657 / Type Ba4).